Here is an 82-residue protein sequence, read N- to C-terminus: Small ribosomal subunit protein uS17 (82 aa).

Belongs to the universal ribosomal protein uS17 family. Part of the 30S ribosomal subunit.

In terms of biological role, one of the primary rRNA binding proteins, it binds specifically to the 5'-end of 16S ribosomal RNA. In Bradyrhizobium sp. (strain BTAi1 / ATCC BAA-1182), this protein is Small ribosomal subunit protein uS17.